The following is a 189-amino-acid chain: UPF0301 protein RP032 (189 aa).

The protein belongs to the UPF0301 (AlgH) family.

In Rickettsia prowazekii (strain Madrid E), this protein is UPF0301 protein RP032.